The sequence spans 344 residues: Phosphate acyltransferase (344 aa).

It belongs to the PlsX family. In terms of assembly, homodimer. Probably interacts with PlsY.

Its subcellular location is the cytoplasm. It catalyses the reaction a fatty acyl-[ACP] + phosphate = an acyl phosphate + holo-[ACP]. Its pathway is lipid metabolism; phospholipid metabolism. Its function is as follows. Catalyzes the reversible formation of acyl-phosphate (acyl-PO(4)) from acyl-[acyl-carrier-protein] (acyl-ACP). This enzyme utilizes acyl-ACP as fatty acyl donor, but not acyl-CoA. The protein is Phosphate acyltransferase of Cyanothece sp. (strain PCC 7425 / ATCC 29141).